The following is a 531-amino-acid chain: Polypyrimidine tract-binding protein 2 (531 aa).

An N-acetylmethionine modification is found at methionine 1. Phosphoserine occurs at positions 26 and 27. RRM domains are found at residues 59–133 (RVLH…YSNH) and 181–257 (LRII…FSKL). The residue at position 308 (serine 308) is a Phosphoserine. RRM domains are found at residues 338 to 412 (TVLL…LSKH) and 455 to 529 (ATLH…FSKS).

As to quaternary structure, monomer. Interacts with NOVA1; the interaction is direct. Identified in a mRNP complex, at least composed of DHX9, DDX3X, ELAVL1, HNRNPU, IGF2BP1, ILF3, PABPC1, PCBP2, PTBP2, STAU1, STAU2, SYNCRIP and YBX1. Part of a ternary complex containing KHSRP and HNRPH1. Interacts with NOVA2; the interaction is direct.

Its subcellular location is the nucleus. Functionally, RNA-binding protein which binds to intronic polypyrimidine tracts and mediates negative regulation of exons splicing. May antagonize in a tissue-specific manner the ability of NOVA1 to activate exon selection. In addition to its function in pre-mRNA splicing, plays also a role in the regulation of translation. The protein is Polypyrimidine tract-binding protein 2 of Rattus norvegicus (Rat).